The primary structure comprises 101 residues: MIPGEILTDDGEHELNAGRPTLTVVVANTGDRPVQVGSHYHFFEANDALSFDRAAARGFRLNIAAGTAVRFEPGQTRTVELVELAGDRAVYGFQGKVMGPL.

The protein belongs to the urease beta subunit family. In terms of assembly, heterotrimer of UreA (gamma), UreB (beta) and UreC (alpha) subunits. Three heterotrimers associate to form the active enzyme.

It is found in the cytoplasm. It carries out the reaction urea + 2 H2O + H(+) = hydrogencarbonate + 2 NH4(+). It participates in nitrogen metabolism; urea degradation; CO(2) and NH(3) from urea (urease route): step 1/1. The polypeptide is Urease subunit beta (Burkholderia ambifaria (strain ATCC BAA-244 / DSM 16087 / CCUG 44356 / LMG 19182 / AMMD) (Burkholderia cepacia (strain AMMD))).